A 214-amino-acid polypeptide reads, in one-letter code: Dynein axonemal assembly factor 6 (214 aa).

2 disordered regions span residues 1–22 (MESE…QNVD) and 34–68 (ALSK…NIGP).

Belongs to the PIH1 family. In terms of assembly, interacts with HSPA1A/B and HSP90AA1. Interacts with DNAAF2 and DNAAF4. Interacts wuth DNAI2. Expressed in testis, small intestine, prostate, adrenal gland, spleen, lung, bladder, breast and ovary. Expressed in ciliated epithelial cells.

Its subcellular location is the cytoplasm. The protein localises to the golgi apparatus. The protein resides in the trans-Golgi network. Plays a role in cytoplasmic pre-assembly of axonemal dynein. The protein is Dynein axonemal assembly factor 6 of Homo sapiens (Human).